Here is a 491-residue protein sequence, read N- to C-terminus: Galactose-1-phosphate uridylyltransferase 1 (491 aa).

The protein belongs to the galactose-1-phosphate uridylyltransferase type 2 family.

It localises to the cytoplasm. The enzyme catalyses alpha-D-galactose 1-phosphate + UDP-alpha-D-glucose = alpha-D-glucose 1-phosphate + UDP-alpha-D-galactose. It functions in the pathway carbohydrate metabolism; galactose metabolism. This chain is Galactose-1-phosphate uridylyltransferase 1 (galT1), found in Streptococcus pneumoniae serotype 4 (strain ATCC BAA-334 / TIGR4).